The chain runs to 311 residues: Tyrosine recombinase XerD (311 aa).

One can recognise a Core-binding (CB) domain in the interval 3–88 (DMSAAYVEAF…ALRQFYKFLY (86 aa)). The Tyr recombinase domain maps to 109 to 298 (TLPKTLSIED…LEERLHDLVQ (190 aa)). Active-site residues include arginine 156, lysine 180, histidine 250, arginine 253, and histidine 276. Tyrosine 285 acts as the O-(3'-phospho-DNA)-tyrosine intermediate in catalysis.

The protein belongs to the 'phage' integrase family. XerD subfamily. Forms a cyclic heterotetrameric complex composed of two molecules of XerC and two molecules of XerD.

It localises to the cytoplasm. In terms of biological role, site-specific tyrosine recombinase, which acts by catalyzing the cutting and rejoining of the recombining DNA molecules. The XerC-XerD complex is essential to convert dimers of the bacterial chromosome into monomers to permit their segregation at cell division. It also contributes to the segregational stability of plasmids. The protein is Tyrosine recombinase XerD of Rhizobium meliloti (strain 1021) (Ensifer meliloti).